Reading from the N-terminus, the 119-residue chain is Large ribosomal subunit protein bL20 (119 aa).

It belongs to the bacterial ribosomal protein bL20 family.

Its function is as follows. Binds directly to 23S ribosomal RNA and is necessary for the in vitro assembly process of the 50S ribosomal subunit. It is not involved in the protein synthesizing functions of that subunit. This is Large ribosomal subunit protein bL20 from Rhodopseudomonas palustris (strain ATCC BAA-98 / CGA009).